Reading from the N-terminus, the 739-residue chain is Malate synthase G (739 aa).

Over residues 1-18 the composition is skewed to polar residues; sequence MTEQELLSAQTADNAGTD. The segment at 1 to 23 is disordered; that stretch reads MTEQELLSAQTADNAGTDSTERV. Acetyl-CoA contacts are provided by residues V135, 142-143, S292, and R329; that span reads RF. R356 serves as the catalytic Proton acceptor. Glyoxylate contacts are provided by residues R356, E447, and 472-475; that span reads GFLD. Mg(2+)-binding residues include E447 and D475. P556 lines the acetyl-CoA pocket. Residue C633 is modified to Cysteine sulfenic acid (-SOH). Residue D647 is the Proton donor of the active site.

This sequence belongs to the malate synthase family. GlcB subfamily. Monomer. The cofactor is Mg(2+).

The protein resides in the cytoplasm. The enzyme catalyses glyoxylate + acetyl-CoA + H2O = (S)-malate + CoA + H(+). It participates in carbohydrate metabolism; glyoxylate cycle; (S)-malate from isocitrate: step 2/2. Its activity is regulated as follows. Inhibited by oxalate, glycolate and ATP. Involved in the glycolate utilization. Catalyzes the condensation and subsequent hydrolysis of acetyl-coenzyme A (acetyl-CoA) and glyoxylate to form malate and CoA. This chain is Malate synthase G, found in Corynebacterium glutamicum (strain ATCC 13032 / DSM 20300 / JCM 1318 / BCRC 11384 / CCUG 27702 / LMG 3730 / NBRC 12168 / NCIMB 10025 / NRRL B-2784 / 534).